A 322-amino-acid polypeptide reads, in one-letter code: Putative DNA-directed RNA polymerase subunit alpha-like 2 (322 aa).

The alpha N-terminal domain (alpha-NTD) stretch occupies residues 1–232; that stretch reads MSNPNNGAEW…GLLSLVFQAE (232 aa). The alpha C-terminal domain (alpha-CTD) stretch occupies residues 280–322; the sequence is EGPVTDEEGDSIDPTFTPVQKWDITMNSYQYSGETFQGLLSRF.

It belongs to the RNA polymerase alpha chain family. In terms of assembly, in plastids the minimal PEP RNA polymerase catalytic core is composed of four subunits: alpha, beta, beta', and beta''. When a (nuclear-encoded) sigma factor is associated with the core the holoenzyme is formed, which can initiate transcription.

It is found in the plastid. It localises to the chloroplast. It carries out the reaction RNA(n) + a ribonucleoside 5'-triphosphate = RNA(n+1) + diphosphate. Functionally, DNA-dependent RNA polymerase catalyzes the transcription of DNA into RNA using the four ribonucleoside triphosphates as substrates. The sequence is that of Putative DNA-directed RNA polymerase subunit alpha-like 2 (rpoAL2-A) from Pelargonium hortorum (Common geranium).